The primary structure comprises 427 residues: MSRSGLPAVVIDNGTGYTKMGYAGNTEPQYIIPTAIATKGIAEDPRCRARRWWCPWAAGKNIADLDFFIGDEAYENSKVYQITMPVRHGQVENWTHMEQFWEHCIFKYLRCEPEDHHFLLTEPPLNAPENREYTAEIMFETFNVPGLYIAVQAVLALAASWTSKQVTEKTLTGTVIDSGDGVTHVIPVAEGYVIGSSIKHIPLAGRDITNFVLQLLRERNEKIPPAETLEVAKRIKETFSYVCPDIVKEFKKYDTEPDKWFKTYEGIESVGKKPYNVDVGYERFLGPEIFFNPEIFSSDFLTPLPKVVDETIQSCPIDTRRGLYKNIVLSGGSTMFKDFGKRLQRDIKRAVDYRIKRSEELSQGRIKSKAVDVKVISHHMQRFAVWFGGSMLASTPEFYKVCHTKQQYDEVGPSICRHNPVFGAMTM.

This sequence belongs to the actin family. ARP3 subfamily. In terms of assembly, component of the Arp2/3 complex composed of ARP2, ARP3, ARPC1B/p41-ARC, ARPC2/p34-ARC, ARPC3/p21-ARC, ARPC4/p20-ARC and ARPC5/p16-ARC.

The protein resides in the cytoplasm. It localises to the cytoskeleton. It is found in the cell projection. Its function is as follows. Functions as ATP-binding component of the Arp2/3 complex which is involved in regulation of actin polymerization and together with an activating nucleation-promoting factor (NPF) mediates the formation of branched actin networks. Seems to contact the pointed end of the daughter actin filament. The sequence is that of Actin-related protein 3 (ARP3) from Acanthamoeba castellanii (Amoeba).